The following is a 482-amino-acid chain: Cysteine--tRNA ligase (482 aa).

Cys-28 is a Zn(2+) binding site. A 'HIGH' region motif is present at residues 30-40; that stretch reads PTVYNFLHVGN. Positions 208, 233, and 237 each coordinate Zn(2+). A 'KMSKS' region motif is present at residues 265 to 269; the sequence is KMSKS. An ATP-binding site is contributed by Lys-268.

The protein belongs to the class-I aminoacyl-tRNA synthetase family. In terms of assembly, monomer. It depends on Zn(2+) as a cofactor.

It localises to the cytoplasm. It catalyses the reaction tRNA(Cys) + L-cysteine + ATP = L-cysteinyl-tRNA(Cys) + AMP + diphosphate. The polypeptide is Cysteine--tRNA ligase (Bdellovibrio bacteriovorus (strain ATCC 15356 / DSM 50701 / NCIMB 9529 / HD100)).